The chain runs to 228 residues: Response regulator SaeR (228 aa).

A Response regulatory domain is found at 3–116; that stretch reads HLLIVDDEQD…ELVLRINNLL (114 aa). Asp-51 carries the 4-aspartylphosphate modification. The ompR/PhoB-type DNA-binding region spans 127-226; the sequence is VEQLSFDELT…VWGLGYKFER (100 aa).

Phosphorylated by SaeS.

The protein localises to the cytoplasm. Member of the two-component regulatory system SaeR/SaeS involved in the regulation of staphylococcal virulence factors in a strain-dependent fashion. Probably functions as a transcriptional regulator via a specific DNA-binding domain, recognizing motifs near the promoter sequences of target genes. The sequence is that of Response regulator SaeR (saeR) from Staphylococcus aureus (strain USA300).